We begin with the raw amino-acid sequence, 339 residues long: uncharacterized protein (339 aa).

A Rhodanese domain is found at 17–111; it reads VRGEIKCLDV…WEDLSLPQNE (95 aa).

This is an uncharacterized protein from Schizosaccharomyces pombe (strain 972 / ATCC 24843) (Fission yeast).